The primary structure comprises 217 residues: Imidazole glycerol phosphate synthase subunit HisH (217 aa).

In terms of domain architecture, Glutamine amidotransferase type-1 spans 3 to 217; sequence TIAIVDYGMG…IYRNFVHWKP (215 aa). Cys82 serves as the catalytic Nucleophile. Active-site residues include His197 and Glu199.

Heterodimer of HisH and HisF.

The protein resides in the cytoplasm. The enzyme catalyses 5-[(5-phospho-1-deoxy-D-ribulos-1-ylimino)methylamino]-1-(5-phospho-beta-D-ribosyl)imidazole-4-carboxamide + L-glutamine = D-erythro-1-(imidazol-4-yl)glycerol 3-phosphate + 5-amino-1-(5-phospho-beta-D-ribosyl)imidazole-4-carboxamide + L-glutamate + H(+). It carries out the reaction L-glutamine + H2O = L-glutamate + NH4(+). It participates in amino-acid biosynthesis; L-histidine biosynthesis; L-histidine from 5-phospho-alpha-D-ribose 1-diphosphate: step 5/9. In terms of biological role, IGPS catalyzes the conversion of PRFAR and glutamine to IGP, AICAR and glutamate. The HisH subunit catalyzes the hydrolysis of glutamine to glutamate and ammonia as part of the synthesis of IGP and AICAR. The resulting ammonia molecule is channeled to the active site of HisF. The sequence is that of Imidazole glycerol phosphate synthase subunit HisH from Ralstonia nicotianae (strain ATCC BAA-1114 / GMI1000) (Ralstonia solanacearum).